We begin with the raw amino-acid sequence, 198 residues long: Recombination protein RecR (198 aa).

The C4-type zinc finger occupies 58–73 (CLNCGNVGTSDICDIC). The 95-residue stretch at 81–175 (GELCVVEDVA…RLTSLAQGVP (95 aa)) folds into the Toprim domain.

The protein belongs to the RecR family.

May play a role in DNA repair. It seems to be involved in an RecBC-independent recombinational process of DNA repair. It may act with RecF and RecO. This Ruegeria pomeroyi (strain ATCC 700808 / DSM 15171 / DSS-3) (Silicibacter pomeroyi) protein is Recombination protein RecR.